The primary structure comprises 307 residues: Zygote arrest protein 2.L (307 aa).

The interval 138–200 is disordered; sequence LPQGGRLPKK…EEPGNEEQTK (63 aa). Positions 156 to 186 are enriched in basic and acidic residues; it reads LKERAPSPEDKEREKVSEKEPDTKDELEKRP. Residues 208 to 293 form a 3CxxC-type zinc finger; the sequence is QKYGYFHCKD…QELCGRCKNK (86 aa).

It belongs to the ZAR1 family. Expressed in oocytes.

The protein localises to the cytoplasm. Its subcellular location is the cytoplasmic ribonucleoprotein granule. Functionally, mRNA-binding protein required for maternal mRNA storage, translation and degradation during oocyte maturation. Probably promotes formation of some phase-separated membraneless compartment that stores maternal mRNAs in oocytes: acts by undergoing liquid-liquid phase separation upon binding to maternal mRNAs. Binds to the 3'-UTR of maternal mRNAs, inhibiting their translation. This is Zygote arrest protein 2.L (zar2.L) from Xenopus laevis (African clawed frog).